Here is a 321-residue protein sequence, read N- to C-terminus: Probable cell division protein WhiA (321 aa).

A DNA-binding region (H-T-H motif) is located at residues 275–308 (SLDELGRLADPPMTKDAVAGRIRRLLAMADKRAA).

Belongs to the WhiA family.

Its function is as follows. Involved in cell division and chromosome segregation. This Micrococcus luteus (strain ATCC 4698 / DSM 20030 / JCM 1464 / CCM 169 / CCUG 5858 / IAM 1056 / NBRC 3333 / NCIMB 9278 / NCTC 2665 / VKM Ac-2230) (Micrococcus lysodeikticus) protein is Probable cell division protein WhiA.